The primary structure comprises 436 residues: uncharacterized protein (436 aa).

This is an uncharacterized protein from Haemophilus influenzae (strain ATCC 51907 / DSM 11121 / KW20 / Rd).